A 143-amino-acid polypeptide reads, in one-letter code: Nucleoside diphosphate kinase (143 aa).

The ATP site is built by Lys11, Phe59, Arg87, Thr93, Arg104, and Asn114. The active-site Pros-phosphohistidine intermediate is His117.

This sequence belongs to the NDK family. As to quaternary structure, homotetramer. The cofactor is Mg(2+).

Its subcellular location is the cytoplasm. It carries out the reaction a 2'-deoxyribonucleoside 5'-diphosphate + ATP = a 2'-deoxyribonucleoside 5'-triphosphate + ADP. The catalysed reaction is a ribonucleoside 5'-diphosphate + ATP = a ribonucleoside 5'-triphosphate + ADP. Its function is as follows. Major role in the synthesis of nucleoside triphosphates other than ATP. The ATP gamma phosphate is transferred to the NDP beta phosphate via a ping-pong mechanism, using a phosphorylated active-site intermediate. The polypeptide is Nucleoside diphosphate kinase (Nitrosococcus oceani (strain ATCC 19707 / BCRC 17464 / JCM 30415 / NCIMB 11848 / C-107)).